Reading from the N-terminus, the 184-residue chain is MSDIIKDTKSRMQKSIDNLSRELANISAGRANSNLLNGVTVDYYGAPTPVQQLASINVPEARLLVISPYDKSSVADIEKAIIAANLGVNPTSDGEVIRISVPALTEERRKELVKEVKKIGEDAKVSIRNIRRDINDQLKKDEKNGDITEDDLRSQTDDVQKATDNSIKEIDQLVADKEKDIMSV.

The tract at residues 141–165 is disordered; the sequence is DEKNGDITEDDLRSQTDDVQKATDN.

Belongs to the RRF family.

It is found in the cytoplasm. In terms of biological role, responsible for the release of ribosomes from messenger RNA at the termination of protein biosynthesis. May increase the efficiency of translation by recycling ribosomes from one round of translation to another. This chain is Ribosome-recycling factor, found in Staphylococcus epidermidis (strain ATCC 35984 / DSM 28319 / BCRC 17069 / CCUG 31568 / BM 3577 / RP62A).